The primary structure comprises 275 residues: 4-diphosphocytidyl-2-C-methyl-D-erythritol kinase (275 aa).

The active site involves Lys-9. An ATP-binding site is contributed by 90-100 (PVGGGLGGGSS). Asp-132 is an active-site residue.

It belongs to the GHMP kinase family. IspE subfamily.

The enzyme catalyses 4-CDP-2-C-methyl-D-erythritol + ATP = 4-CDP-2-C-methyl-D-erythritol 2-phosphate + ADP + H(+). It functions in the pathway isoprenoid biosynthesis; isopentenyl diphosphate biosynthesis via DXP pathway; isopentenyl diphosphate from 1-deoxy-D-xylulose 5-phosphate: step 3/6. Its function is as follows. Catalyzes the phosphorylation of the position 2 hydroxy group of 4-diphosphocytidyl-2C-methyl-D-erythritol. The sequence is that of 4-diphosphocytidyl-2-C-methyl-D-erythritol kinase from Sulfurihydrogenibium sp. (strain YO3AOP1).